A 306-amino-acid polypeptide reads, in one-letter code: Ornithine carbamoyltransferase (306 aa).

Residues 50-53 (STRT), glutamine 77, arginine 101, and 128-131 (HPCQ) each bind carbamoyl phosphate. Residues asparagine 160, aspartate 224, and 228–229 (SM) each bind L-ornithine. Residues 264–265 (CL) and arginine 292 each bind carbamoyl phosphate.

It belongs to the aspartate/ornithine carbamoyltransferase superfamily. OTCase family.

It is found in the cytoplasm. It carries out the reaction carbamoyl phosphate + L-ornithine = L-citrulline + phosphate + H(+). It functions in the pathway amino-acid biosynthesis; L-arginine biosynthesis; L-arginine from L-ornithine and carbamoyl phosphate: step 1/3. In terms of biological role, reversibly catalyzes the transfer of the carbamoyl group from carbamoyl phosphate (CP) to the N(epsilon) atom of ornithine (ORN) to produce L-citrulline. The chain is Ornithine carbamoyltransferase from Mycobacterium leprae (strain TN).